The sequence spans 339 residues: Ketol-acid reductoisomerase (NADP(+)) (339 aa).

One can recognise a KARI N-terminal Rossmann domain in the interval 1–182 (MRVYYDRDAD…GGGRSGIIET (182 aa)). Residues 24-27 (YGSQ), Lys48, Ser51, Thr53, and 83-86 (DELQ) each bind NADP(+). His108 is a catalytic residue. Gly134 contributes to the NADP(+) binding site. The KARI C-terminal knotted domain occupies 183–328 (NFKEECETDL…AKLRGMMPWI (146 aa)). Mg(2+)-binding residues include Asp191, Glu195, Glu227, and Glu231. Ser252 serves as a coordination point for substrate.

It belongs to the ketol-acid reductoisomerase family. The cofactor is Mg(2+).

It catalyses the reaction (2R)-2,3-dihydroxy-3-methylbutanoate + NADP(+) = (2S)-2-acetolactate + NADPH + H(+). It carries out the reaction (2R,3R)-2,3-dihydroxy-3-methylpentanoate + NADP(+) = (S)-2-ethyl-2-hydroxy-3-oxobutanoate + NADPH + H(+). It participates in amino-acid biosynthesis; L-isoleucine biosynthesis; L-isoleucine from 2-oxobutanoate: step 2/4. It functions in the pathway amino-acid biosynthesis; L-valine biosynthesis; L-valine from pyruvate: step 2/4. Involved in the biosynthesis of branched-chain amino acids (BCAA). Catalyzes an alkyl-migration followed by a ketol-acid reduction of (S)-2-acetolactate (S2AL) to yield (R)-2,3-dihydroxy-isovalerate. In the isomerase reaction, S2AL is rearranged via a Mg-dependent methyl migration to produce 3-hydroxy-3-methyl-2-ketobutyrate (HMKB). In the reductase reaction, this 2-ketoacid undergoes a metal-dependent reduction by NADPH to yield (R)-2,3-dihydroxy-isovalerate. In Agrobacterium fabrum (strain C58 / ATCC 33970) (Agrobacterium tumefaciens (strain C58)), this protein is Ketol-acid reductoisomerase (NADP(+)).